Consider the following 374-residue polypeptide: Mitochondrial inner membrane protein oxa1-1 (374 aa).

The chain crosses the membrane as a helical span at residues Thr77 to Val97. The Mitochondrial intermembrane segment spans residues Arg98 to Pro159. The helical transmembrane segment at Phe160 to Ile180 threads the bilayer. Over Arg181 to Thr242 the chain is Mitochondrial matrix. Residues Phe243–Phe263 form a helical membrane-spanning segment. Residues Met264 to Asn374 lie on the Mitochondrial intermembrane side of the membrane.

This sequence belongs to the OXA1/ALB3/YidC family.

The protein localises to the mitochondrion inner membrane. Functionally, required for the insertion of integral membrane proteins into the mitochondrial inner membrane. Essential for the activity and assembly of cytochrome c oxidase. Not essential for viability, while oxa102 is essential. When both genes are deleted the cell is non-viable, suggesting that oxa101 act as a back-up for oxa102. This chain is Mitochondrial inner membrane protein oxa1-1 (oxa101), found in Schizosaccharomyces pombe (strain 972 / ATCC 24843) (Fission yeast).